A 347-amino-acid polypeptide reads, in one-letter code: Probable dual-specificity RNA methyltransferase RlmN (347 aa).

Residue Glu-90 is the Proton acceptor of the active site. The Radical SAM core domain maps to 96–326 (YKHGNSICIS…VTVRREMGSD (231 aa)). A disulfide bridge links Cys-103 with Cys-331. [4Fe-4S] cluster is bound by residues Cys-110, Cys-114, and Cys-117. S-adenosyl-L-methionine contacts are provided by residues 157-158 (GE), Ser-189, 212-214 (SLH), and Asn-288. Cys-331 acts as the S-methylcysteine intermediate in catalysis.

The protein belongs to the radical SAM superfamily. RlmN family. It depends on [4Fe-4S] cluster as a cofactor.

The protein localises to the cytoplasm. It carries out the reaction adenosine(2503) in 23S rRNA + 2 reduced [2Fe-2S]-[ferredoxin] + 2 S-adenosyl-L-methionine = 2-methyladenosine(2503) in 23S rRNA + 5'-deoxyadenosine + L-methionine + 2 oxidized [2Fe-2S]-[ferredoxin] + S-adenosyl-L-homocysteine. The catalysed reaction is adenosine(37) in tRNA + 2 reduced [2Fe-2S]-[ferredoxin] + 2 S-adenosyl-L-methionine = 2-methyladenosine(37) in tRNA + 5'-deoxyadenosine + L-methionine + 2 oxidized [2Fe-2S]-[ferredoxin] + S-adenosyl-L-homocysteine. Specifically methylates position 2 of adenine 2503 in 23S rRNA and position 2 of adenine 37 in tRNAs. The chain is Probable dual-specificity RNA methyltransferase RlmN from Clostridium botulinum (strain Eklund 17B / Type B).